We begin with the raw amino-acid sequence, 292 residues long: Enoyl-CoA hydratase domain-containing protein 2, mitochondrial (292 aa).

A mitochondrion-targeting transit peptide spans 1–35; the sequence is MLRVLCLLRPWRPLRARGCASDGAAGGSEIQVRAL. An N6-acetyllysine; alternate modification is found at Lys97. Residue Lys97 is modified to N6-succinyllysine; alternate.

Belongs to the enoyl-CoA hydratase/isomerase family.

It localises to the mitochondrion. The polypeptide is Enoyl-CoA hydratase domain-containing protein 2, mitochondrial (ECHDC2) (Homo sapiens (Human)).